We begin with the raw amino-acid sequence, 348 residues long: MSPYVFLIISISLFLGTSLTLFSNHWLMAWMGLEINTLAIIPMMTYPNHPRSTEAAIKYFLTQATASMLVMFAIIHNAWMTNQWTLFQMANSAASVLMTLALAMKLGLAPFHFWVPEVTQGIPLSSGMILLTWQKIAPTALLYQISPTLNMKVLITLAFLSTMLGGWGGLNQTHLRKILAYSSIAHMGWMTIVMMINPSLALLNLLIYIIATLTLFLMLNFASVTKIKSLTNLWNKSAPMTTAILLTLLSLGGLPPLTGFMPKWLILQELVSNNNIIMATLMALSALLNLFFYMRIIYASTLTMFPTTNNSKIQWPYPQTKTINIIPTLTIISSLLLPLTPLLTTLMY.

The next 10 helical transmembrane spans lie at 2-22 (SPYV…LTLF), 26-46 (WLMA…MMTY), 55-75 (AAIK…FAII), 96-116 (VLMT…FWVP), 149-169 (LNMK…GWGG), 178-198 (ILAY…MINP), 199-219 (SLAL…FLML), 242-262 (TAIL…GFMP), 276-296 (IIMA…YMRI), and 323-343 (INII…TPLL).

The protein belongs to the complex I subunit 2 family. In terms of assembly, core subunit of respiratory chain NADH dehydrogenase (Complex I) which is composed of 45 different subunits. Interacts with TMEM242.

Its subcellular location is the mitochondrion inner membrane. The catalysed reaction is a ubiquinone + NADH + 5 H(+)(in) = a ubiquinol + NAD(+) + 4 H(+)(out). In terms of biological role, core subunit of the mitochondrial membrane respiratory chain NADH dehydrogenase (Complex I) that is believed to belong to the minimal assembly required for catalysis. Complex I functions in the transfer of electrons from NADH to the respiratory chain. The immediate electron acceptor for the enzyme is believed to be ubiquinone. The sequence is that of NADH-ubiquinone oxidoreductase chain 2 from Osphranter robustus (Wallaroo).